Consider the following 63-residue polypeptide: Large ribosomal subunit protein uL29 (63 aa).

This sequence belongs to the universal ribosomal protein uL29 family.

The protein is Large ribosomal subunit protein uL29 of Ectopseudomonas mendocina (strain ymp) (Pseudomonas mendocina).